A 448-amino-acid polypeptide reads, in one-letter code: Mitochondrial distribution and morphology protein 10 (448 aa).

It belongs to the MDM10 family. In terms of assembly, component of the ER-mitochondria encounter structure (ERMES) or MDM complex, composed of MMM1, MDM10, MDM12 and MDM34. Associates with the mitochondrial outer membrane sorting assembly machinery SAM(core) complex.

The protein resides in the mitochondrion outer membrane. Functionally, component of the ERMES/MDM complex, which serves as a molecular tether to connect the endoplasmic reticulum and mitochondria. Components of this complex are involved in the control of mitochondrial shape and protein biogenesis and may function in phospholipid exchange. MDM10 is involved in the late assembly steps of the general translocase of the mitochondrial outer membrane (TOM complex). Functions in the TOM40-specific route of the assembly of outer membrane beta-barrel proteins, including the association of TOM40 with the receptor TOM22 and small TOM proteins. Can associate with the SAM(core) complex as well as the MDM12-MMM1 complex, both involved in late steps of the major beta-barrel assembly pathway, that is responsible for biogenesis of all outer membrane beta-barrel proteins. May act as a switch that shuttles between both complexes and channels precursor proteins into the TOM40-specific pathway. Plays a role in mitochondrial morphology and in the inheritance of mitochondria. The protein is Mitochondrial distribution and morphology protein 10 of Zygosaccharomyces rouxii (strain ATCC 2623 / CBS 732 / NBRC 1130 / NCYC 568 / NRRL Y-229).